A 271-amino-acid polypeptide reads, in one-letter code: Mannosyl-3-phosphoglycerate phosphatase (271 aa).

Aspartate 13 serves as the catalytic Nucleophile. Residues aspartate 13, aspartate 15, and aspartate 214 each coordinate Mg(2+).

Belongs to the HAD-like hydrolase superfamily. MPGP family. It depends on Mg(2+) as a cofactor.

The protein localises to the cytoplasm. The enzyme catalyses 2-O-(alpha-D-mannosyl)-3-phosphoglycerate + H2O = (2R)-2-O-(alpha-D-mannosyl)-glycerate + phosphate. The sequence is that of Mannosyl-3-phosphoglycerate phosphatase (yedP) from Shigella sonnei (strain Ss046).